The primary structure comprises 78 residues: Probable [Fe-S]-dependent transcriptional repressor (78 aa).

The iron-sulfur cluster site is built by Cys-56, Cys-61, Cys-64, and Cys-70.

Belongs to the FeoC family.

May function as a transcriptional regulator that controls feoABC expression. In Escherichia coli (strain UTI89 / UPEC), this protein is Probable [Fe-S]-dependent transcriptional repressor.